The following is a 924-amino-acid chain: Type II inositol 3,4-bisphosphate 4-phosphatase (924 aa).

Basic and acidic residues predominate over residues 1-13 (MEIKEEGASEEGQ). 3 disordered regions span residues 1-25 (MEIK…SDPG), 481-516 (ILKK…HSDY), and 546-569 (DGGS…DAIP). The 143-residue stretch at 23–165 (DPGDCQFTSI…LKSKEQLLVL (143 aa)) folds into the C2 domain.

The protein belongs to the inositol 3,4-bisphosphate 4-phosphatase family.

The catalysed reaction is a 1,2-diacyl-sn-glycero-3-phospho-(1D-myo-inositol-3,4-bisphosphate) + H2O = a 1,2-diacyl-sn-glycero-3-phospho-(1D-myo-inositol-3-phosphate) + phosphate. The enzyme catalyses 1D-myo-inositol 1,3,4-trisphosphate + H2O = 1D-myo-inositol 1,3-bisphosphate + phosphate. It catalyses the reaction 1D-myo-inositol 3,4-bisphosphate + H2O = 1D-myo-inositol 3-phosphate + phosphate. It functions in the pathway signal transduction; phosphatidylinositol signaling pathway. Its activity is regulated as follows. Strongly inhibited by inositol hexakisphosphate. Catalyzes the hydrolysis of the 4-position phosphate of phosphatidylinositol 3,4-bisphosphate, inositol 1,3,4-trisphosphate and inositol 3,4-bisphosphate. Plays a role in the late stages of macropinocytosis by dephosphorylating phosphatidylinositol 3,4-bisphosphate in membrane ruffles. Antagonizes the PI3K-AKT/PKB signaling pathway by dephosphorylating phosphoinositides and thereby modulating cell cycle progression and cell survival. This Pongo abelii (Sumatran orangutan) protein is Type II inositol 3,4-bisphosphate 4-phosphatase (INPP4B).